The chain runs to 210 residues: dTTP/UTP pyrophosphatase (210 aa).

Over residues 1 to 15 the composition is skewed to basic and acidic residues; sequence MTHGDNRDGPGRETR. Positions 1–22 are disordered; that stretch reads MTHGDNRDGPGRETRSSGPLVL. The Proton acceptor role is filled by Asp-86.

It belongs to the Maf family. YhdE subfamily. The cofactor is a divalent metal cation.

It localises to the cytoplasm. The enzyme catalyses dTTP + H2O = dTMP + diphosphate + H(+). The catalysed reaction is UTP + H2O = UMP + diphosphate + H(+). In terms of biological role, nucleoside triphosphate pyrophosphatase that hydrolyzes dTTP and UTP. May have a dual role in cell division arrest and in preventing the incorporation of modified nucleotides into cellular nucleic acids. In Rhodospirillum rubrum (strain ATCC 11170 / ATH 1.1.1 / DSM 467 / LMG 4362 / NCIMB 8255 / S1), this protein is dTTP/UTP pyrophosphatase.